The following is a 102-amino-acid chain: Small ribosomal subunit protein uS10 (102 aa).

This sequence belongs to the universal ribosomal protein uS10 family. Part of the 30S ribosomal subunit.

In terms of biological role, involved in the binding of tRNA to the ribosomes. This is Small ribosomal subunit protein uS10 from Mycoplasma mobile (strain ATCC 43663 / 163K / NCTC 11711) (Mesomycoplasma mobile).